A 211-amino-acid chain; its full sequence is Large ribosomal subunit protein uL3 (211 aa).

Residues 130–154 (RGPMAHGSKFHRHQGSNGSATTPGR) form a disordered region.

It belongs to the universal ribosomal protein uL3 family. In terms of assembly, part of the 50S ribosomal subunit. Forms a cluster with proteins L14 and L19.

Functionally, one of the primary rRNA binding proteins, it binds directly near the 3'-end of the 23S rRNA, where it nucleates assembly of the 50S subunit. The sequence is that of Large ribosomal subunit protein uL3 from Lachnospira eligens (strain ATCC 27750 / DSM 3376 / VPI C15-48 / C15-B4) (Eubacterium eligens).